The chain runs to 669 residues: DNA ligase (669 aa).

Residues 34–38 (DAEYD), 83–84 (SL), and glutamate 117 contribute to the NAD(+) site. Lysine 119 functions as the N6-AMP-lysine intermediate in the catalytic mechanism. 4 residues coordinate NAD(+): arginine 140, glutamate 177, lysine 293, and lysine 317. 4 residues coordinate Zn(2+): cysteine 411, cysteine 414, cysteine 429, and cysteine 434. The BRCT domain occupies 591-669 (RLGGRFTGKT…EDEFLKMLEG (79 aa)).

The protein belongs to the NAD-dependent DNA ligase family. LigA subfamily. Mg(2+) serves as cofactor. The cofactor is Mn(2+).

The catalysed reaction is NAD(+) + (deoxyribonucleotide)n-3'-hydroxyl + 5'-phospho-(deoxyribonucleotide)m = (deoxyribonucleotide)n+m + AMP + beta-nicotinamide D-nucleotide.. Functionally, DNA ligase that catalyzes the formation of phosphodiester linkages between 5'-phosphoryl and 3'-hydroxyl groups in double-stranded DNA using NAD as a coenzyme and as the energy source for the reaction. It is essential for DNA replication and repair of damaged DNA. This Geotalea daltonii (strain DSM 22248 / JCM 15807 / FRC-32) (Geobacter daltonii) protein is DNA ligase.